A 209-amino-acid chain; its full sequence is MDWDSVAAEDVIEALREVEWSASPRSLAEFFSRFAFPRSFSKWMSRLKCNLYYYRTNYFILFVFVLGLALITRPLAILGAALTALSLAFLNDSFAATFNEKMIRTIRHFSPHLAAKMRPPHMPVIRGRSATRKTVYICGQPRLVFVLLGLTASFVLWFTSCGLLWVLYALTTALLMILLHASLRTPNLKARLNTFREEFRAVWRNYSEL.

Helical transmembrane passes span 51–72 (LYYYRTNYFILFVFVLGLALIT), 76–98 (AILGAALTALSLAFLNDSFAATF), 143–163 (LVFVLLGLTASFVLWFTSCGL), and 164–184 (LWVLYALTTALLMILLHASLR).

This sequence belongs to the PRA1 family.

It localises to the endosome membrane. Its function is as follows. May be involved in both secretory and endocytic intracellular trafficking in the endosomal/prevacuolar compartments. The protein is PRA1 family protein A3 (PRA1A3) of Arabidopsis thaliana (Mouse-ear cress).